Here is a 147-residue protein sequence, read N- to C-terminus: Holdfast attachment protein A (147 aa).

Its function is as follows. Involved in attachment of the holdfast to the cell. The holdfast is a structure that allows the bacteria to firmly adheres to surfaces. This chain is Holdfast attachment protein A (hfaA), found in Caulobacter vibrioides (strain ATCC 19089 / CIP 103742 / CB 15) (Caulobacter crescentus).